A 72-amino-acid polypeptide reads, in one-letter code: SRY-related protein ADW4 (72 aa).

The segment at residues 1–69 (VKRPMNAFMV…KHMADYPNYK (69 aa)) is a DNA-binding region (HMG box).

Its subcellular location is the nucleus. The protein is SRY-related protein ADW4 of Alligator mississippiensis (American alligator).